The sequence spans 248 residues: Protein GrpE (248 aa).

Positions 229-248 (AAPKEDTLPAQENQSSPADS) are disordered. The span at 238-248 (AQENQSSPADS) shows a compositional bias: polar residues.

This sequence belongs to the GrpE family. As to quaternary structure, homodimer.

Its subcellular location is the cytoplasm. Functionally, participates actively in the response to hyperosmotic and heat shock by preventing the aggregation of stress-denatured proteins, in association with DnaK and GrpE. It is the nucleotide exchange factor for DnaK and may function as a thermosensor. Unfolded proteins bind initially to DnaJ; upon interaction with the DnaJ-bound protein, DnaK hydrolyzes its bound ATP, resulting in the formation of a stable complex. GrpE releases ADP from DnaK; ATP binding to DnaK triggers the release of the substrate protein, thus completing the reaction cycle. Several rounds of ATP-dependent interactions between DnaJ, DnaK and GrpE are required for fully efficient folding. This Nostoc sp. (strain PCC 7120 / SAG 25.82 / UTEX 2576) protein is Protein GrpE.